We begin with the raw amino-acid sequence, 75 residues long: Small ribosomal subunit protein bS18 (75 aa).

It belongs to the bacterial ribosomal protein bS18 family. Part of the 30S ribosomal subunit. Forms a tight heterodimer with protein bS6.

Binds as a heterodimer with protein bS6 to the central domain of the 16S rRNA, where it helps stabilize the platform of the 30S subunit. In Colwellia psychrerythraea (strain 34H / ATCC BAA-681) (Vibrio psychroerythus), this protein is Small ribosomal subunit protein bS18.